The primary structure comprises 358 residues: MSKSTATAQNLSFVLEGIHQVKFEDRPIPELKDPHDVLVNVKFTGICGSDVHYWEHGSIGQFVVKGPMVLGHESSGVISKVGSAVTGLKVGDRVAMEPGIPCRRCEPCKAGKYNLCEKMAFAATPPYDGTLAKFYVLPEDFCYKLPDNISLQEGALMEPLGVAVHIVKQASVTPGQSVIVFGAGPVGLLCCAVAKAFGAAKIIAVDIQKARLDFAKKYAATSTFEPAKVSAVDNADRLRKENNLGVGADVVIDASGAEPSVHTGIHVLRPGGTYVQGGMGRSEIMFPIMAACTKELAIKGSFRYGSGDYNLAVGLVASGKVNVKDLITGVVEFHDAEQAFKEVKAGKGIKTLIAGIQD.

Zn(2+) is bound by residues Cys-47, His-72, and Glu-73. NAD(+) is bound at residue 182–187 (GAGPVG).

It belongs to the zinc-containing alcohol dehydrogenase family. The cofactor is Zn(2+).

The catalysed reaction is xylitol + NAD(+) = D-xylulose + NADH + H(+). It participates in carbohydrate degradation; L-arabinose degradation via L-arabinitol; D-xylulose 5-phosphate from L-arabinose (fungal route): step 4/5. In terms of biological role, xylitol dehydrogenase which catalyzes the conversion of xylitol to D-xylulose. Xylose is a major component of hemicelluloses such as xylan. Most fungi utilize D-xylose via three enzymatic reactions, xylose reductase (XR), xylitol dehydrogenase (XDH), and xylulokinase, to form xylulose 5-phosphate, which enters pentose phosphate pathway. The sequence is that of Probable D-xylulose reductase A (xdhA) from Aspergillus fumigatus (strain CBS 144.89 / FGSC A1163 / CEA10) (Neosartorya fumigata).